A 1066-amino-acid polypeptide reads, in one-letter code: Cytoplasmic dynein 2 intermediate chain 1 (1066 aa).

Disordered regions lie at residues 22–366 and 381–408; these read LWAI…ENAR and YEDD…LEEL. Ser-30 is modified (phosphoserine). 5 stretches are compositionally biased toward basic and acidic residues: residues 30–135, 147–171, 180–256, 264–308, and 316–336; these read SKEE…EELR, ETRD…RSEE, DEDR…EERH, GFHF…KRDG, and NLVR…HEEG. Phosphoserine is present on Ser-247. Acidic residues-rich tracts occupy residues 351–362 and 381–397; these read ETVEIEKEETDL and YEDD…ESSN. Positions 399 to 408 are enriched in basic and acidic residues; that stretch reads PESREKLEEL. Residues 473–552 are binding to the DYNLT2B-DYNLT1/DYNLT3 dimer; it reads ASHRQKSRTQ…DIQTEEIETR (80 aa). 4 WD repeats span residues 694–734, 775–821, 907–947, and 952–992; these read ICES…RLHY, VHKK…KADI, IRPV…PLLQ, and TDSH…LGPV.

It belongs to the dynein light intermediate chain family. Intermediate chain of the cytoplasmic dynein complex 2, a multisubunit complex, composed at least of eleven different proteins. The cytoplasmic dynein 2 complex consists of two catalytic heavy chains (HCs) and a number of non-catalytic subunits presented by intermediate chains (ICs), light intermediate chains (LICs) and light chains (LCs). Among them, a heavy chain (DYNC2H1), two intermediate chains (DYNC2I2 and DYNC2I1), a light intermediate chain (DYNC2LI1), and a light chain (DYNLT2B) are unique to the cytoplasmic dynein complex 2, but a subset of the light chains are also shared by dynein-1 and dynein-2 complexes. Interacts with DYNC2I2; their C-terminal domains each bind a copy of the heavy chain, and their extended N-terminal regions are held together by an array of light chain dimers. Interacts with DYNLT2B. Interacts (via the N-terminal half) with DYNLT2B-DYNLT1 dimer or with DYNLT2B-DYNLT3 dimer; this interaction is crucial for retrograde trafficking of ciliary proteins. Expressed in chondrocytes (at protein level).

Its subcellular location is the cell projection. The protein resides in the cilium. It localises to the cytoplasm. The protein localises to the cytoskeleton. It is found in the microtubule organizing center. Its subcellular location is the centrosome. Its function is as follows. Acts as one of several non-catalytic accessory components of the cytoplasmic dynein 2 complex (dynein-2 complex), a motor protein complex that drives the movement of cargos along microtubules within cilia and flagella in concert with the intraflagellar transport (IFT) system. DYNC2I1 plays a major role in retrograde ciliary protein trafficking in cilia and flagella. Also requires to maintain a functional transition zone. The chain is Cytoplasmic dynein 2 intermediate chain 1 from Homo sapiens (Human).